We begin with the raw amino-acid sequence, 395 residues long: Cystathionine beta-lyase MetC (395 aa).

N6-(pyridoxal phosphate)lysine is present on Lys210.

This sequence belongs to the trans-sulfuration enzymes family. Homotetramer; dimer of dimers. Pyridoxal 5'-phosphate serves as cofactor.

Its subcellular location is the cytoplasm. The catalysed reaction is L,L-cystathionine + H2O = L-homocysteine + pyruvate + NH4(+). It carries out the reaction L-cysteine + H2O = hydrogen sulfide + pyruvate + NH4(+) + H(+). The enzyme catalyses an S-substituted L-cysteine + H2O = a thiol + pyruvate + NH4(+). Its pathway is amino-acid biosynthesis; L-methionine biosynthesis via de novo pathway; L-homocysteine from L-cystathionine: step 1/1. Its activity is regulated as follows. L-cysteine inhibits cystathionine beta-lyase activity competitively. Inhibited by aminoethoxyvinylglycine (AVG). Functionally, primarily catalyzes the cleavage of cystathionine to homocysteine, pyruvate and ammonia during methionine biosynthesis. Also exhibits cysteine desulfhydrase activity, producing sulfide from cysteine. In addition, under certain growth conditions, exhibits significant alanine racemase coactivity. The protein is Cystathionine beta-lyase MetC of Escherichia coli (strain K12).